We begin with the raw amino-acid sequence, 261 residues long: 3-methyl-2-oxobutanoate hydroxymethyltransferase (261 aa).

Residues Asp44 and Asp83 each contribute to the Mg(2+) site. Residues 44–45 (DS), Asp83, and Lys113 each bind 3-methyl-2-oxobutanoate. Position 115 (Glu115) interacts with Mg(2+). Glu183 acts as the Proton acceptor in catalysis.

This sequence belongs to the PanB family. Homodecamer; pentamer of dimers. It depends on Mg(2+) as a cofactor.

The protein localises to the cytoplasm. The catalysed reaction is 3-methyl-2-oxobutanoate + (6R)-5,10-methylene-5,6,7,8-tetrahydrofolate + H2O = 2-dehydropantoate + (6S)-5,6,7,8-tetrahydrofolate. It functions in the pathway cofactor biosynthesis; (R)-pantothenate biosynthesis; (R)-pantoate from 3-methyl-2-oxobutanoate: step 1/2. Its function is as follows. Catalyzes the reversible reaction in which hydroxymethyl group from 5,10-methylenetetrahydrofolate is transferred onto alpha-ketoisovalerate to form ketopantoate. The polypeptide is 3-methyl-2-oxobutanoate hydroxymethyltransferase (Cyanothece sp. (strain PCC 7425 / ATCC 29141)).